The chain runs to 465 residues: SET domain-containing protein 3 (465 aa).

The region spanning 18–265 is the SET domain; sequence DKVTVKWDKK…AREELLDSYG (248 aa).

Belongs to the class V-like SAM-binding methyltransferase superfamily.

This chain is SET domain-containing protein 3 (set-3), found in Caenorhabditis elegans.